Consider the following 108-residue polypeptide: Translation initiation factor 1A (108 aa).

Residues 10-84 (IRVITPNKKS…EKGDIIYRYT (75 aa)) enclose the S1-like domain.

Belongs to the eIF-1A family.

Its function is as follows. Seems to be required for maximal rate of protein biosynthesis. Enhances ribosome dissociation into subunits and stabilizes the binding of the initiator Met-tRNA(I) to 40 S ribosomal subunits. This chain is Translation initiation factor 1A, found in Picrophilus torridus (strain ATCC 700027 / DSM 9790 / JCM 10055 / NBRC 100828 / KAW 2/3).